Here is a 94-residue protein sequence, read N- to C-terminus: Putative regulatory protein Tmel_0100 (94 aa).

This sequence belongs to the RemA family.

This chain is Putative regulatory protein Tmel_0100, found in Thermosipho melanesiensis (strain DSM 12029 / CIP 104789 / BI429).